Here is a 498-residue protein sequence, read N- to C-terminus: Polygalacturonan/rhamnogalacturonan-binding protein YtcQ (498 aa).

The first 22 residues, 1–22 (MGNKWRVLLIVLVLALGGVLAG), serve as a signal peptide directing secretion. C23 is lipidated: N-palmitoyl cysteine. The S-diacylglycerol cysteine moiety is linked to residue C23.

Belongs to the bacterial solute-binding protein 1 family. As to quaternary structure, the complex is probably composed of two ATP-binding proteins (MsmX), two transmembrane proteins (YtcP and YteP) and a solute-binding protein (YtcQ).

Its subcellular location is the cell membrane. In terms of biological role, involved in pectin degradation. Part of the ABC transporter complex YtcQP-YteP involved in the uptake of polygalacturonan and rhamnogalacturonan type I. In Bacillus subtilis (strain 168), this protein is Polygalacturonan/rhamnogalacturonan-binding protein YtcQ (ytcQ).